We begin with the raw amino-acid sequence, 351 residues long: Peptide chain release factor 1 (351 aa).

Q229 carries the post-translational modification N5-methylglutamine.

This sequence belongs to the prokaryotic/mitochondrial release factor family. Post-translationally, methylated by PrmC. Methylation increases the termination efficiency of RF1.

The protein resides in the cytoplasm. Peptide chain release factor 1 directs the termination of translation in response to the peptide chain termination codons UAG and UAA. The protein is Peptide chain release factor 1 of Dinoroseobacter shibae (strain DSM 16493 / NCIMB 14021 / DFL 12).